Reading from the N-terminus, the 28-residue chain is Omega-gliadin (28 aa).

The segment at 1 to 28 (ARQLNPSDQELQSPQQLYPQQPYPQQPY) is disordered. Low complexity predominate over residues 9 to 20 (QELQSPQQLYPQ).

The sequence is that of Omega-gliadin from Triticum monococcum (Einkorn wheat).